Consider the following 480-residue polypeptide: G-protein coupled receptor seb-2 (480 aa).

The Extracellular segment spans residues 1 to 222; the sequence is MNPSISTAGA…CMSNGDVEAR (222 aa). Asn-95 is a glycosylation site (N-linked (GlcNAc...) asparagine). A helical membrane pass occupies residues 223-243; that stretch reads ILAGLLTYSASVIFLIPAVFL. The Cytoplasmic portion of the chain corresponds to 244 to 261; sequence LTLLRPIRCQPMFILHRH. A helical transmembrane segment spans residues 262–282; sequence LLISCLLYGAFYLITVSLFVV. Over 283–305 the chain is Extracellular; sequence NDAPLSSQVFQNHLFCRLLFSIQ. Residues 306–328 traverse the membrane as a helical segment; sequence LRYLRLTNFTWMLAEAVYLWRLL. Residues 329 to 343 lie on the Cytoplasmic side of the membrane; the sequence is HTAQHSEGETLRSYK. The chain crosses the membrane as a helical span at residues 344–364; it reads VICWGVPGVITVVYIFVRSLN. Topologically, residues 365–386 are extracellular; the sequence is DDVGMCWIENSTVAWIEWMIIT. A helical membrane pass occupies residues 387-407; the sequence is PSLLAMGVNLLLLGLIVYILV. At 408-423 the chain is on the cytoplasmic side; sequence KKLRCDPHLERIQYRK. A helical transmembrane segment spans residues 424-444; sequence AVRGALMLIPVFGVQQLLTIY. Over 445-480 the chain is Extracellular; sequence RFRNVCLIYRLLHKSFCRRMCSEILVITSGEAGSRS.

This sequence belongs to the G-protein coupled receptor 2 family. Present in the head body-wall muscles from the L1 larval stage through to adulthood. Also expressed between L4 and the adult molt in vulval vm1 muscle cells. These cells play a role in opening the vulva during egg laying.

The protein localises to the cell membrane. In terms of biological role, not known. Putative receptor. In Caenorhabditis elegans, this protein is G-protein coupled receptor seb-2.